We begin with the raw amino-acid sequence, 506 residues long: Cytochrome P450 94B3 (506 aa).

A helical transmembrane segment spans residues 2–22 (AFLLSFLILAFLITIIFFLSS). Position 447 (C447) interacts with heme.

Belongs to the cytochrome P450 family. Requires heme as cofactor.

Its subcellular location is the membrane. The protein resides in the endoplasmic reticulum membrane. It carries out the reaction a jasmonyl-L-amino acid + reduced [NADPH--hemoprotein reductase] + O2 = a 12-hydroxyjasmonyl-L-alpha-amino acid + oxidized [NADPH--hemoprotein reductase] + H2O + H(+). The enzyme catalyses L-isoleucine-(+)-7-isojasmonate + NADPH + O2 + H(+) = L-isoleucine-(+)-12-hydroxy-7-isojasmonate + NADP(+) + H2O. The catalysed reaction is a jasmonyl-L-isoleucinate + NADPH + O2 + H(+) = L-isoleucine-12-hydroxyjasmonate + NADP(+) + H2O. Hydroxylase involved in the oxidation of the plant hormone jasmonoyl-L-isoleucine (JA-Ile), a bioactive phytohormone of the jasmonate-mediated signaling pathway. Converts JA-Ile to 12-hydroxy-JA-Ile. Exerts negative feedback control on JA-Ile levels and plays a key role in attenuation of jasmonate responses. Negatively regulates the expression of wound-induced genes TIFY11A/JAZ5, TIFY5A/JAZ8 and TIFY5A/JAZ10. Catalyzes the hydroxylation of jasmonoyl-L-valine (JA-Val), jasmonoyl-L-leucine (JA-Leu) and jasmonoyl-L-phenylalanine (JA-Phe) in vitro. Converts JA-Val, JA-Leu and JA-Phe to 12-hydroxy-JA-Val, 12-hydroxy-JA-Leu and 12-hydroxy-JA-Phe, respectively. This is Cytochrome P450 94B3 from Arabidopsis thaliana (Mouse-ear cress).